The primary structure comprises 919 residues: Exostosin-like 3 (919 aa).

Topologically, residues 1–30 (MTGYTMLRNGGAGNGGQTCMLRWSNRIRLT) are cytoplasmic. Residues 1–140 (MTGYTMLRNG…LKNVISQTEH (140 aa)) form a required for interaction with REG3A region. The chain crosses the membrane as a helical; Signal-anchor for type II membrane protein span at residues 31-51 (WLSFTLFVILVFFPLIAHYYL). Residues 52 to 919 (TTLDEADEAG…HDKTKCFKFI (868 aa)) lie on the Lumenal side of the membrane. Intrachain disulfides connect Cys-177–Cys-182 and Cys-188–Cys-236. N-linked (GlcNAc...) asparagine glycosylation is present at Asn-290. At Ser-362 the chain carries Phosphoserine. A disulfide bridge connects residues Cys-400 and Cys-415. N-linked (GlcNAc...) asparagine glycosylation occurs at Asn-592. 8 residues coordinate UDP-N-acetyl-alpha-D-glucosamine: Leu-668, Arg-672, Asn-697, Asn-723, Arg-728, Asp-744, Asp-745, and Asp-746. Asp-746 contributes to the Mn(2+) binding site. The N-linked (GlcNAc...) asparagine glycan is linked to Asn-790. A disulfide bridge connects residues Cys-831 and Cys-879. Residues Glu-832, Asp-833, and Arg-876 each contribute to the UDP-N-acetyl-alpha-D-glucosamine site. Residue Asp-833 is part of the active site.

It belongs to the glycosyltransferase 47 family. Homodimer; disulfide-linked. Interacts with REG3A. Requires Mn(2+) as cofactor. In terms of tissue distribution, ubiquitous. Expressed in keratinocytes. Expressed in pancreas.

It is found in the endoplasmic reticulum membrane. Its subcellular location is the golgi apparatus. It localises to the cell membrane. The protein resides in the nucleus. It carries out the reaction 3-O-(beta-D-GlcA-(1-&gt;3)-beta-D-Gal-(1-&gt;3)-beta-D-Gal-(1-&gt;4)-beta-D-Xyl)-L-seryl-[protein] + UDP-N-acetyl-alpha-D-glucosamine = 3-O-(alpha-D-GlcNAc-(1-&gt;4)-beta-D-GlcA-(1-&gt;3)-beta-D-Gal-(1-&gt;3)-beta-D-Gal-(1-&gt;4)-beta-D-Xyl)-L-seryl-[protein] + UDP + H(+). It participates in glycan metabolism; heparan sulfate biosynthesis. Its function is as follows. Glycosyltransferase which regulates the biosynthesis of heparan sulfate (HS). Initiates HS synthesis by transferring the first N-acetyl-alpha-D-glucosamine (alpha-GlcNAc) residue (GlcNAcT-I activity) to the tetrasaccharide linker (GlcA-Gal-Gal-Xyl-)Ser core linker. May also transfer alpha-GlcNAc residues during HS elongation (GlcNAcT-II activity). Lacks glucuronyl transferase II (GlcAT-II) activity. Important for both skeletal development and hematopoiesis, through the formation of HS proteoglycans (HSPGs). Through the synthesis of HS, regulates postnatal pancreatic islet maturation and insulin secretion. Functionally, receptor for REG3A, REG3B and REG3G, induces the activation of downstream signaling pathways such as PI3K-AKT or RAS-RAF-MEK-ERK signaling pathway. Required for the function of REG3A in regulating keratinocyte proliferation and differentiation. Required for the inhibition of skin inflammation mediated by REG3A through the activation of PI3K-AKT-STAT3 pathway. Required for the function of REG3A and REG3G in glucose tolerance in pancreas. Expressed in microglia, is activated by nociceptor-derived REG3G in response to endotoxins, leading to the inhibition of kynurenine pathway to prevent endotoxic death. The sequence is that of Exostosin-like 3 from Homo sapiens (Human).